Consider the following 1115-residue polypeptide: Receptor-type tyrosine-protein phosphatase H (1115 aa).

An N-terminal signal peptide occupies residues 1-27; it reads MAGAGGGLGVWGNLVLLGLCSWTGARA. Residues 28–754 are Extracellular-facing; the sequence is PAPNPGRNLT…VVCHTESAGV (727 aa). Fibronectin type-III domains are found at residues 32–121, 122–209, 210–299, 300–387, 388–477, 478–563, 564–666, and 665–749; these read PGRN…APNP, VRNL…TAHN, PVRN…APNP, VRNL…TAPN, PVRN…VPNA, VTSL…TAAT, APNE…TYPD, and PDTV…VCHT. Residues Asn35, Asn83, Asn172, Asn256, Asn285, Asn350, Asn434, Asn468, Asn556, and Asn642 are each glycosylated (N-linked (GlcNAc...) asparagine). A helical transmembrane segment spans residues 755 to 775; sequence IAGAFVGILLFLILVGLLIFF. Topologically, residues 776-1115 are cytoplasmic; sequence LKRRNKKKQQ…AAIQAHKLEV (340 aa). Residues 820-1079 form the Tyrosine-protein phosphatase domain; the sequence is FADEYQQLSL…VFLHQCILRF (260 aa). Residue Cys1020 is the Phosphocysteine intermediate of the active site. Phosphotyrosine occurs at positions 1094 and 1102.

Belongs to the protein-tyrosine phosphatase family. Receptor class 3 subfamily. Homodimer; disulfide-linked. Interacts with LCK. Interacts (phosphorylated form) with GRB2 (via SH2 domain). Interacts (phosphorylated form) with FYN (via SH2 domain). Interacts (via extracellular domain) with CEACAM20 (via extracellular domain); the interaction dephosphorylates CEACAM20. In terms of tissue distribution, expressed at high levels in the brain, spleen and liver and at lower levels in the heart and stomach. Expressed in pancreatic and colorectal cancer cells, but not in normal pancreas or colon. Expression in hepatocellular carcinoma is related to the differentiation status of the tumor and expression is inversely related to tumor aggressiveness.

It localises to the cell projection. Its subcellular location is the microvillus membrane. The protein localises to the apical cell membrane. It is found in the cytoplasm. The enzyme catalyses O-phospho-L-tyrosyl-[protein] + H2O = L-tyrosyl-[protein] + phosphate. With respect to regulation, regulated by reversible dimerization. Dimerization reduces its catalytic activity. Its function is as follows. Protein phosphatase that may contribute to contact inhibition of cell growth and motility by mediating the dephosphorylation of focal adhesion-associated substrates and thus negatively regulating integrin-promoted signaling processes. Induces apoptotic cell death by at least two distinct mechanisms: inhibition of cell survival signaling mediated by PI 3-kinase, Akt, and ILK and activation of a caspase-dependent proapoptotic pathway. Inhibits the basal activity of LCK and its activation in response to TCR stimulation and TCR-induced activation of MAP kinase and surface expression of CD69. Inhibits TCR-induced tyrosine phosphorylation of LAT and ZAP70. Inhibits both basal activity of DOK1 and its CD2-induced tyrosine phosphorylation. Induces dephosphorylation of BCAR1, focal adhesion kinase and SRC. Reduces migratory activity of activity of Jurkat cells. Reduces tyrosine phosphorylation of CEACAM20 and thereby contributes to suppress the intestinal immune response CEACAM20. The sequence is that of Receptor-type tyrosine-protein phosphatase H (PTPRH) from Homo sapiens (Human).